The primary structure comprises 586 residues: Regulatory protein NPR3 (586 aa).

Phosphoserine is present on S10. The BTB domain occupies 60–135; the sequence is SDAEIIVDGV…IYTGRLKPFP (76 aa). The C2HC NPR-type zinc finger occupies 138-152; sequence VSTCVDPVCSHDCCR. C141, C146, H148, and C151 together coordinate Zn(2+). 3 ANK repeats span residues 261–291, 293–320, and 324–353; these read ERIG…TLDQ, NGLH…DVNY, and RGYT…NASE. A salicylic acid-binding core (SBC) region spans residues 383 to 523; sequence ESSKARLCID…MAEYIDDDIL (141 aa). R428 provides a ligand contact to salicylate. The interval 554–586 is disordered; the sequence is YSKDKESKIARSCLSASSSPSSSSIRDDLHNTT. Residues 565–577 show a composition bias toward low complexity; the sequence is SCLSASSSPSSSS.

This sequence belongs to the plant 'ANKYRIN-BTB/POZ' family. 'NPR1-like' subfamily. As to quaternary structure, forms homodimers and heterodimers with NPR4 in the presence of salicylic acid (SA). Interacts with TGA2, TGA3, TGA5 and TGA6. Interacts with CUL3A, a core component of the cullin-RING ubiquitin ligases (CRL). Interacts with TGA2 in vivo in the nucleus. Binds to NPR1; this interaction is promoted by association with SA, probably due to conformational changes.

The protein resides in the nucleus. The protein operates within protein modification; protein ubiquitination. In terms of biological role, salicylic acid (SA)-binding substrate-specific adapter of an E3 ubiquitin-protein ligase complex (CUL3-RBX1-BTB) which mediates the ubiquitination and subsequent proteasomal degradation of NPR1 in response to SA. Together with NPR4, acts as receptor of salicylic acid to monitor immunity in a NPR1-dependent manner and induce systemic acquired resistance (SAR). Involved in the regulation of basal defense responses against pathogens, and may be implicated in the cross-talk between the SA- and JA-dependent signaling pathways. The sequence is that of Regulatory protein NPR3 from Arabidopsis thaliana (Mouse-ear cress).